The primary structure comprises 109 residues: Putative double-stranded DNA mimic protein KPK_2119 (109 aa).

This sequence belongs to the putative dsDNA mimic protein family.

Functionally, may act as a double-stranded DNA (dsDNA) mimic. Probably regulates the activity of a dsDNA-binding protein. This is Putative double-stranded DNA mimic protein KPK_2119 from Klebsiella pneumoniae (strain 342).